The chain runs to 163 residues: Shikimate kinase (163 aa).

Residue 10 to 15 (GVGKTT) coordinates ATP. T14 is a Mg(2+) binding site. Positions 28, 52, and 75 each coordinate substrate. ATP is bound at residue R116. R134 is a binding site for substrate. ATP is bound at residue R151.

It belongs to the shikimate kinase family. Monomer. Mg(2+) serves as cofactor.

The protein resides in the cytoplasm. It carries out the reaction shikimate + ATP = 3-phosphoshikimate + ADP + H(+). The protein operates within metabolic intermediate biosynthesis; chorismate biosynthesis; chorismate from D-erythrose 4-phosphate and phosphoenolpyruvate: step 5/7. Catalyzes the specific phosphorylation of the 3-hydroxyl group of shikimic acid using ATP as a cosubstrate. In Streptococcus pyogenes serotype M4 (strain MGAS10750), this protein is Shikimate kinase.